Consider the following 468-residue polypeptide: Putative chitinase 1 (468 aa).

Residues Met-1 to Gly-21 form the signal peptide. Residues Phe-22–Tyr-381 enclose the GH18 domain. Cys-26 and Cys-51 are disulfide-bonded. Residues Val-73 to Phe-74 and Gly-100 to Asp-103 contribute to the chitin site. The active-site Proton donor is Glu-143. Chitin is bound by residues Tyr-144, Lys-213–Asp-216, and Trp-353. Positions Ser-386–Gln-440 form a coiled coil.

The protein belongs to the glycosyl hydrolase 18 family. Prismatic layer of shell (at protein level). Expressed primarily in the mantle with highest level in the outer epithelium of the mantle edge and lower level in the mantle pallium.

It is found in the secreted. It catalyses the reaction Random endo-hydrolysis of N-acetyl-beta-D-glucosaminide (1-&gt;4)-beta-linkages in chitin and chitodextrins.. This chain is Putative chitinase 1, found in Margaritifera margaritifera (Freshwater pearl mussel).